The chain runs to 443 residues: Phosphoglucosamine mutase (443 aa).

Catalysis depends on Ser-101, which acts as the Phosphoserine intermediate. 4 residues coordinate Mg(2+): Ser-101, Asp-239, Asp-241, and Asp-243. The residue at position 101 (Ser-101) is a Phosphoserine.

Belongs to the phosphohexose mutase family. It depends on Mg(2+) as a cofactor. Post-translationally, activated by phosphorylation.

It catalyses the reaction alpha-D-glucosamine 1-phosphate = D-glucosamine 6-phosphate. Functionally, catalyzes the conversion of glucosamine-6-phosphate to glucosamine-1-phosphate. The sequence is that of Phosphoglucosamine mutase from Francisella philomiragia subsp. philomiragia (strain ATCC 25017 / CCUG 19701 / FSC 153 / O#319-036).